Here is a 236-residue protein sequence, read N- to C-terminus: 2-C-methyl-D-erythritol 4-phosphate cytidylyltransferase (236 aa).

The protein belongs to the IspD/TarI cytidylyltransferase family. IspD subfamily. Homodimer.

The enzyme catalyses 2-C-methyl-D-erythritol 4-phosphate + CTP + H(+) = 4-CDP-2-C-methyl-D-erythritol + diphosphate. The protein operates within isoprenoid biosynthesis; isopentenyl diphosphate biosynthesis via DXP pathway; isopentenyl diphosphate from 1-deoxy-D-xylulose 5-phosphate: step 2/6. Functionally, catalyzes the formation of 4-diphosphocytidyl-2-C-methyl-D-erythritol from CTP and 2-C-methyl-D-erythritol 4-phosphate (MEP). This chain is 2-C-methyl-D-erythritol 4-phosphate cytidylyltransferase, found in Shigella flexneri serotype 5b (strain 8401).